The following is a 385-amino-acid chain: DNA replication and repair protein RecF (385 aa).

Position 30-37 (30-37 (GPNGYGKT)) interacts with ATP.

Belongs to the RecF family.

It localises to the cytoplasm. Functionally, the RecF protein is involved in DNA metabolism; it is required for DNA replication and normal SOS inducibility. RecF binds preferentially to single-stranded, linear DNA. It also seems to bind ATP. In Mycobacterium tuberculosis (strain ATCC 25177 / H37Ra), this protein is DNA replication and repair protein RecF.